The primary structure comprises 186 residues: MDDERGKLAVYPGTFDPLTMGHVSLIRRGRQIFDRVIVAVAMDTPKTPLFSLDERVRMAEEVFADHEGITVEPFSGLLVDYAERRGANVILRGLRAVSDFEYEFQLALMNRKLKRHVQTVFLMTDYQWLYISSTIIKAAASLGGDIKGLVPDNVYRRLREKYGYPYPLNPGLALSTEADEDLPPSL.

Thr14 provides a ligand contact to substrate. ATP contacts are provided by residues 14 to 15 (TF) and His22. Lys46, Leu78, and Arg92 together coordinate substrate. Residues 93–95 (GLR), Glu103, and 128–134 (WLYISST) contribute to the ATP site.

It belongs to the bacterial CoaD family. Homohexamer. The cofactor is Mg(2+).

It is found in the cytoplasm. The catalysed reaction is (R)-4'-phosphopantetheine + ATP + H(+) = 3'-dephospho-CoA + diphosphate. It participates in cofactor biosynthesis; coenzyme A biosynthesis; CoA from (R)-pantothenate: step 4/5. Its function is as follows. Reversibly transfers an adenylyl group from ATP to 4'-phosphopantetheine, yielding dephospho-CoA (dPCoA) and pyrophosphate. This chain is Phosphopantetheine adenylyltransferase, found in Nitratidesulfovibrio vulgaris (strain ATCC 29579 / DSM 644 / CCUG 34227 / NCIMB 8303 / VKM B-1760 / Hildenborough) (Desulfovibrio vulgaris).